A 249-amino-acid chain; its full sequence is Proteasome subunit alpha (249 aa).

A disordered region spans residues 229–249; it reads EAREAEEAAEAQSSEDGGATD.

This sequence belongs to the peptidase T1A family. The 20S proteasome core is composed of 14 alpha and 14 beta subunits that assemble into four stacked heptameric rings, resulting in a barrel-shaped structure. The two inner rings, each composed of seven catalytic beta subunits, are sandwiched by two outer rings, each composed of seven alpha subunits. The catalytic chamber with the active sites is on the inside of the barrel. Has a gated structure, the ends of the cylinder being occluded by the N-termini of the alpha-subunits. Is capped by the proteasome-associated ATPase, ARC.

It localises to the cytoplasm. It participates in protein degradation; proteasomal Pup-dependent pathway. The formation of the proteasomal ATPase ARC-20S proteasome complex, likely via the docking of the C-termini of ARC into the intersubunit pockets in the alpha-rings, may trigger opening of the gate for substrate entry. Interconversion between the open-gate and close-gate conformations leads to a dynamic regulation of the 20S proteasome proteolysis activity. Component of the proteasome core, a large protease complex with broad specificity involved in protein degradation. This chain is Proteasome subunit alpha, found in Thermobifida fusca (strain YX).